The following is a 686-amino-acid chain: Myb-related protein B (686 aa).

The tract at residues 1–28 is disordered; sequence MARRSRGEDQDELHCQDTDSDVPEQRDG. 3 consecutive HTH myb-type domains span residues 26 to 77, 78 to 133, and 134 to 184; these read RDGR…LRVL, NPDL…NPEV, and KKSS…KRKV. 3 consecutive DNA-binding regions (H-T-H motif) follow at residues 54 to 77, 106 to 129, and 157 to 180; these read WKFLASHFPNRSDQQCQYRWLRVL, WTLIAKHLKGRLGKQCRERWHNHL, and WAEIAKLLPGRTDNAVKNHWNSTI. Disordered regions lie at residues 315 to 355 and 493 to 512; these read CDLT…VTEY and YVVDNTPHTPTPFKNALEKY. The segment covering 326–343 has biased composition (low complexity); the sequence is PSAGSSSSSNSPVRQTPS.

Component of the DREAM complex. Expressed in hematopoietic and non hematopoietic cells.

It is found in the nucleus. Its function is as follows. Represses v-myb- and c-myb-mediated activation of the mim-1 gene, probably by competing with other myb proteins for binding sites. It is an inhibitory member of the myb family. The protein is Myb-related protein B (MYBL2) of Gallus gallus (Chicken).